Here is a 449-residue protein sequence, read N- to C-terminus: Methylenetetrahydrofolate--tRNA-(uracil-5-)-methyltransferase TrmFO (449 aa).

Gly9–Gly14 contacts FAD.

The protein belongs to the MnmG family. TrmFO subfamily. The cofactor is FAD.

Its subcellular location is the cytoplasm. The enzyme catalyses uridine(54) in tRNA + (6R)-5,10-methylene-5,6,7,8-tetrahydrofolate + NADH + H(+) = 5-methyluridine(54) in tRNA + (6S)-5,6,7,8-tetrahydrofolate + NAD(+). It catalyses the reaction uridine(54) in tRNA + (6R)-5,10-methylene-5,6,7,8-tetrahydrofolate + NADPH + H(+) = 5-methyluridine(54) in tRNA + (6S)-5,6,7,8-tetrahydrofolate + NADP(+). In terms of biological role, catalyzes the folate-dependent formation of 5-methyl-uridine at position 54 (M-5-U54) in all tRNAs. The polypeptide is Methylenetetrahydrofolate--tRNA-(uracil-5-)-methyltransferase TrmFO (Ruegeria pomeroyi (strain ATCC 700808 / DSM 15171 / DSS-3) (Silicibacter pomeroyi)).